A 388-amino-acid chain; its full sequence is Tryptophan synthase beta chain 1 (388 aa).

Position 82 is an N6-(pyridoxal phosphate)lysine (Lys-82).

Belongs to the TrpB family. As to quaternary structure, tetramer of two alpha and two beta chains. It depends on pyridoxal 5'-phosphate as a cofactor.

The catalysed reaction is (1S,2R)-1-C-(indol-3-yl)glycerol 3-phosphate + L-serine = D-glyceraldehyde 3-phosphate + L-tryptophan + H2O. Its pathway is amino-acid biosynthesis; L-tryptophan biosynthesis; L-tryptophan from chorismate: step 5/5. Functionally, the beta subunit is responsible for the synthesis of L-tryptophan from indole and L-serine. The chain is Tryptophan synthase beta chain 1 (trpB1) from Pyrococcus abyssi (strain GE5 / Orsay).